We begin with the raw amino-acid sequence, 94 residues long: Large ribosomal subunit protein uL23 (94 aa).

The protein belongs to the universal ribosomal protein uL23 family. As to quaternary structure, part of the 50S ribosomal subunit. Contacts protein L29, and trigger factor when it is bound to the ribosome.

Its function is as follows. One of the early assembly proteins it binds 23S rRNA. One of the proteins that surrounds the polypeptide exit tunnel on the outside of the ribosome. Forms the main docking site for trigger factor binding to the ribosome. The sequence is that of Large ribosomal subunit protein uL23 from Geobacter metallireducens (strain ATCC 53774 / DSM 7210 / GS-15).